Consider the following 207-residue polypeptide: Ion-translocating oxidoreductase complex subunit B (207 aa).

The hydrophobic stretch occupies residues 1 to 29 (MLDLSIIAYLLIAICLIALIFGALLGYFS). The 59-residue stretch at 35–93 (EADPIVDQIDAILPQSQCGQCGYPGCKPYAEAIANGDQITKCVPGGQPLVVKIAELMGV) folds into the 4Fe-4S domain. The [4Fe-4S] cluster site is built by Cys52, Cys55, Cys60, Cys76, Cys116, Cys119, Cys122, Cys126, Cys146, Cys149, Cys152, and Cys156. 2 4Fe-4S ferredoxin-type domains span residues 107-136 (KVAL…GTNK) and 137-166 (AMHT…MIKV).

It belongs to the 4Fe4S bacterial-type ferredoxin family. RnfB subfamily. In terms of assembly, the complex is composed of six subunits: RnfA, RnfB, RnfC, RnfD, RnfE and RnfG. Requires [4Fe-4S] cluster as cofactor.

The protein resides in the cell inner membrane. Functionally, part of a membrane-bound complex that couples electron transfer with translocation of ions across the membrane. The chain is Ion-translocating oxidoreductase complex subunit B from Haemophilus ducreyi (strain 35000HP / ATCC 700724).